A 243-amino-acid chain; its full sequence is Phosphoribosyl isomerase A (243 aa).

Aspartate 9 functions as the Proton acceptor in the catalytic mechanism. Aspartate 128 functions as the Proton donor in the catalytic mechanism.

The protein belongs to the HisA/HisF family.

The protein localises to the cytoplasm. It catalyses the reaction 1-(5-phospho-beta-D-ribosyl)-5-[(5-phospho-beta-D-ribosylamino)methylideneamino]imidazole-4-carboxamide = 5-[(5-phospho-1-deoxy-D-ribulos-1-ylimino)methylamino]-1-(5-phospho-beta-D-ribosyl)imidazole-4-carboxamide. The enzyme catalyses N-(5-phospho-beta-D-ribosyl)anthranilate = 1-(2-carboxyphenylamino)-1-deoxy-D-ribulose 5-phosphate. Its pathway is amino-acid biosynthesis; L-histidine biosynthesis; L-histidine from 5-phospho-alpha-D-ribose 1-diphosphate: step 4/9. It functions in the pathway amino-acid biosynthesis; L-tryptophan biosynthesis; L-tryptophan from chorismate: step 3/5. Its function is as follows. Involved in both the histidine and tryptophan biosynthetic pathways. The sequence is that of Phosphoribosyl isomerase A from Mycobacterium avium (strain 104).